The sequence spans 1522 residues: MKAVRNLLIYIFSTYLLVMFGFNAAQDFWCSTLVKGVIYGSYSVSEMFPKNFTNCTWTLENPDPTKYSIYLKFSKKDLSCSNFSLLAYQFDHFSHEKIKDLLRKNHSIMQLCSSKNAFVFLQYDKNFIQIRRVFPTDFPGLQKKVEEDQKSFFEFLVLNKVSPSQFGCHVLCTWLESCLKSENGRTESCGIMYTKCTCPQHLGEWGIDDQSLVLLNNVVLPLNEQTEGCLTQELQTTQVCNLTREAKRPPKEEFGMMGDHTIKSQRPRSVHEKRVPQEQADAAKFMAQTGESGVEEWSQWSACSVTCGQGSQVRTRTCVSPYGTHCSGPLRESRVCNNTALCPVHGVWEEWSPWSLCSFTCGRGQRTRTRSCTPPQYGGRPCEGPETHHKPCNIALCPVDGQWQEWSSWSHCSVTCSNGTQQRSRQCTAAAHGGSECRGPWAESRECYNPECTANGQWNQWGHWSGCSKSCDGGWERRMRTCQGAAVTGQQCEGTGEEVRRCSEQRCPAPYEICPEDYLISMVWKRTPAGDLAFNQCPLNATGTTSRRCSLSLHGVASWEQPSFARCISNEYRHLQHSIKEHLAKGQRMLAGDGMSQVTKTLLDLTQRKNFYAGDLLVSVEILRNVTDTFKRASYIPASDGVQNFFQIVSNLLDEENKEKWEDAQQIYPGSIELMQVIEDFIHIVGMGMMDFQNSYLMTGNVVASIQKLPAASVLTDINFPMKGRKGMVDWARNSEDRVVIPKSIFTPVSSKELDESSVFVLGAVLYKNLDLILPTLRNYTVVNSKVIVVTIRPEPKTTDSFLEIELAHLANGTLNPYCVLWDDSKSNESLGTWSTQGCKTVLTDASHTKCLCDRLSTFAILAQQPREIVMESSGTPSVTLIVGSGLSCLALITLAVVYAALWRYIRSERSIILINFCLSIISSNILILVGQTQTHNKSICTTTTAFLHFFFLASFCWVLTEAWQSYMAVTGKIRTRLIRKRFLCLGWGLPALVVATSVGFTRTKGYGTDHYCWLSLEGGLLYAFVGPAAAVVLVNMVIGILVFNKLVSRDGILDKKLKHRAGQMSEPHSGLTLKCAKCGVVSTTALSATTASNAMASLWSSCVVLPLLALTWMSAVLAMTDKRSILFQILFAVFDSLQGFVIVMVHCILRREVQDAFRCRLRNCQDPINADSSSSFPNGHAQIMTDFEKDVDIACRSVLHKDIGPCRAATITGTLSRISLNDDEEEKGTNPEGLSYSTLPGNVISKVIIQQPTGLHMPMSMNELSNPCLKKENTELRRTVYLCTDDNLRGADMDIVHPQERMMESDYIVMPRSSVSTQPSMKEESKMNIGMETLPHERLLHYKVNPEFNMNPPVMDQFNMNLDQHLAPQEHMQNLPFEPRTAVKNFMASELDDNVGLSRSETGSTISMSSLERRKSRYSDLDFEKVMHTRKRHMELFQELNQKFQTLDRFRDIPNTSSMENPAPNKNPWDTFKPPSEYQHYTTINVLDTEAKDTLELRPAEWEKCLNLPLDVQEGDFQTEV.

Residues 1–25 form the signal peptide; that stretch reads MKAVRNLLIYIFSTYLLVMFGFNAA. Topologically, residues 26 to 880 are extracellular; sequence QDFWCSTLVK…MESSGTPSVT (855 aa). In terms of domain architecture, CUB spans 30-159; the sequence is CSTLVKGVIY…KSFFEFLVLN (130 aa). N-linked (GlcNAc...) asparagine glycosylation is found at N51, N54, N82, N105, and N241. 4 TSP type-1 domains span residues 291 to 343, 345 to 398, 400 to 453, and 455 to 508; these read ESGV…ALCP, HGVW…ALCP, DGQW…PECT, and NGQW…QRCP. Intrachain disulfides connect C303-C336, C307-C342, C318-C326, C357-C392, C361-C397, C372-C382, C412-C447, C416-C452, C427-C437, C467-C502, C471-C507, C482-C492, C514-C549, and C537-C567. The N-linked (GlcNAc...) asparagine glycan is linked to N337. N418 is a glycosylation site (N-linked (GlcNAc...) asparagine). N540 carries N-linked (GlcNAc...) asparagine glycosylation. At S619 the chain carries Phosphoserine. N-linked (GlcNAc...) asparagine glycans are attached at residues N625, N779, N812, and N828. The GAIN-B domain occupies 693–869; it reads QNSYLMTGNV…AILAQQPREI (177 aa). Cystine bridges form between C819/C851 and C839/C853. The tract at residues 819-869 is GPS; it reads CVLWDDSKSNESLGTWSTQGCKTVLTDASHTKCLCDRLSTFAILAQQPREI. The helical transmembrane segment at 881 to 901 threads the bilayer; sequence LIVGSGLSCLALITLAVVYAA. Residues 902–910 are Cytoplasmic-facing; sequence LWRYIRSER. A helical membrane pass occupies residues 911-931; it reads SIILINFCLSIISSNILILVG. Topologically, residues 932-939 are extracellular; that stretch reads QTQTHNKS. N-linked (GlcNAc...) asparagine glycosylation occurs at N937. A helical membrane pass occupies residues 940 to 960; sequence ICTTTTAFLHFFFLASFCWVL. The Cytoplasmic segment spans residues 961–981; it reads TEAWQSYMAVTGKIRTRLIRK. A helical membrane pass occupies residues 982 to 1002; sequence RFLCLGWGLPALVVATSVGFT. The Extracellular portion of the chain corresponds to 1003 to 1023; it reads RTKGYGTDHYCWLSLEGGLLY. A helical transmembrane segment spans residues 1024–1044; the sequence is AFVGPAAAVVLVNMVIGILVF. Over 1045 to 1098 the chain is Cytoplasmic; it reads NKLVSRDGILDKKLKHRAGQMSEPHSGLTLKCAKCGVVSTTALSATTASNAMAS. Residues 1099–1119 form a helical membrane-spanning segment; that stretch reads LWSSCVVLPLLALTWMSAVLA. At 1120–1125 the chain is on the extracellular side; sequence MTDKRS. Residues 1126–1146 traverse the membrane as a helical segment; it reads ILFQILFAVFDSLQGFVIVMV. The Cytoplasmic segment spans residues 1147–1522; the sequence is HCILRREVQD…VQEGDFQTEV (376 aa). Residues S1220 and S1411 each carry the phosphoserine modification.

The protein belongs to the G-protein coupled receptor 2 family. Adhesion G-protein coupled receptor (ADGR) subfamily. As to quaternary structure, forms a heterodimer, consisting of a large extracellular region non-covalently linked to a seven-transmembrane moiety. Interacts (via its TSRs) with C1QL1, C1QL2, C1QL3 and C1QL4. Interacts via (C-terminus) with ELMO1, ELMO2 and ELMO3. The endogenous protein is proteolytically cleaved into 2 subunits, an extracellular subunit and a seven-transmembrane subunit. In terms of tissue distribution, brain-specific expression.

The protein resides in the cell membrane. Its function is as follows. Receptor that plays a role in the regulation of synaptogenesis and dendritic spine formation at least partly via interaction with ELMO1 and RAC1 activity. Promotes myoblast fusion through ELMO/DOCK1. The protein is Adhesion G protein-coupled receptor B3 (Adgrb3) of Mus musculus (Mouse).